The sequence spans 185 residues: Ribosome-recycling factor (185 aa).

Belongs to the RRF family.

Its subcellular location is the cytoplasm. Its function is as follows. Responsible for the release of ribosomes from messenger RNA at the termination of protein biosynthesis. May increase the efficiency of translation by recycling ribosomes from one round of translation to another. This is Ribosome-recycling factor from Clostridium perfringens (strain ATCC 13124 / DSM 756 / JCM 1290 / NCIMB 6125 / NCTC 8237 / Type A).